Consider the following 165-residue polypeptide: Short form salivary protein D7R1 (165 aa).

A signal peptide spans 1-21 (MFNKLHLVSLLACGLFVIAQA). Disulfide bonds link Cys27/Cys59, Cys40/Cys164, and Cys98/Cys117. Serotonin-binding residues include Glu28, His56, Tyr115, Asp132, and Glu135. 3 residues coordinate histamine: Tyr115, Asp132, and Glu135.

The protein belongs to the PBP/GOBP family. As to expression, female salivary gland. Not detected in female carcass without salivary glands. Not detected in male tissues.

It localises to the secreted. In terms of biological role, modulates blood feeding of female mosquitoes on vertebrate species by binding and sequestering different mediators involved in the host response. Binds serotonin and histamine. Increases blood clotting time. The protein is Short form salivary protein D7R1 of Anopheles gambiae (African malaria mosquito).